We begin with the raw amino-acid sequence, 495 residues long: Protein adenylyltransferase Fic (495 aa).

The disordered stretch occupies residues 1–23; the sequence is MGTEAEPPSPPSPPAQQQEQANP. A helical transmembrane segment spans residues 36-58; that stretch reads LYRLVLFFIAGSLTAWMFHAFSS. TPR repeat units follow at residues 121-154 and 155-189; these read ALVSLRMAQDMYLTGKDDKAARLFEHALALAPRH and PEVLLRYGEFLEHNQRNIVLADQYYFQALTISPSN. The Inhibitory (S/T)XXXE(G/N) motif signature appears at 246-251; sequence SVGIEG. ATP contacts are provided by residues glutamate 250 and 331-334; that span reads VGGH. In terms of domain architecture, Fido spans 300-435; sequence ITIKDILELH…IRPFVRFIAD (136 aa). Residue histidine 378 is part of the active site. Residues 382–389, 414–415, and asparagine 422 each bind ATP; these read DGNGRTSR and YY.

It belongs to the fic family. Homodimer.

The protein resides in the membrane. The catalysed reaction is L-tyrosyl-[protein] + ATP = O-(5'-adenylyl)-L-tyrosyl-[protein] + diphosphate. It carries out the reaction L-threonyl-[protein] + ATP = 3-O-(5'-adenylyl)-L-threonyl-[protein] + diphosphate. The enzyme catalyses 3-O-(5'-adenylyl)-L-threonyl-[protein] + H2O = L-threonyl-[protein] + AMP + H(+). Its activity is regulated as follows. The side chain of Glu-250 determines which of the two opposing activities (AMPylase or de-AMPylase) will take place. In response to endoplasmic reticulum stress, mediates de-AMPylase activity. Adenylyltransferase activity is inhibited by the inhibitory helix present at the N-terminus: Glu-250 binds ATP and competes with ATP-binding at Arg-389, thereby preventing adenylyltransferase activity. In unstressed cells, disengagement of Glu-250 promotes adenylyltransferase activity. Activation dissociates ATP-binding from Glu-250, allowing ordered binding of the entire ATP moiety with the alpha-phosphate in an orientation that is productive for accepting an incoming target hydroxyl side chain. In terms of biological role, protein that can both mediate the addition of adenosine 5'-monophosphate (AMP) to specific residues of target proteins (AMPylation), and the removal of the same modification from target proteins (de-AMPylation), depending on the context. The side chain of Glu-250 determines which of the two opposing activities (AMPylase or de-AMPylase) will take place. Acts as a key regulator of the unfolded protein response (UPR) by mediating AMPylation or de-AMPylation of Hsc70-3/BiP. In unstressed cells, acts as an adenylyltransferase by mediating AMPylation of Hsc70-3/BiP at 'Thr-518', thereby inactivating it. In response to endoplasmic reticulum stress, acts as a phosphodiesterase by mediating removal of ATP (de-AMPylation) from Hsc70-3/BiP at 'Thr-518', leading to restore HSPA5/BiP activity. This is Protein adenylyltransferase Fic from Drosophila erecta (Fruit fly).